Consider the following 428-residue polypeptide: Keratin, type I cytoskeletal 18-A (428 aa).

Residues 2–78 (SSSRSVYSSS…NVNLFGGVQN (77 aa)) form a head region. A disordered region spans residues 24 to 45 (SAPRFTPGSSAASVHAGAGGSG). The interval 79 to 114 (EKETMQDLNDRLASYLERVRSLESANKKLEVQIRQH) is coil 1A. In terms of domain architecture, IF rod spans 79–389 (EKETMQDLND…RLLEGDSFDL (311 aa)). The tract at residues 115-130 (TEKKGPAKDWSPYYMT) is linker 1. The segment at 131 to 222 (IEDLKKQVFN…KNHQDDVNEL (92 aa)) is coil 1B. The segment at 223-246 (QAQIASSAVTVEVDAPKSQDLGKI) is linker 12. Residues 247-384 (MADLRAQYDE…IQTYRRLLEG (138 aa)) form a coil 2 region. The interval 385-428 (DSFDLQDAVPVVTTQTVKKVITTTQRLVDGKVVAESNNTEVIKS) is tail.

It belongs to the intermediate filament family. As to quaternary structure, heterotetramer of two type I and two type II keratins. Keratin-18 associates with keratin-8. Proteolytically cleaved by caspases during epithelial cell apoptosis. Expressed at high levels in notochord and low levels in adult liver.

When phosphorylated, plays a role in filament reorganization. The protein is Keratin, type I cytoskeletal 18-A (krt18-a) of Xenopus laevis (African clawed frog).